Here is a 279-residue protein sequence, read N- to C-terminus: Putative pyruvate, phosphate dikinase regulatory protein (279 aa).

153–160 is an ADP binding site; sequence GVSRTSKT.

This sequence belongs to the pyruvate, phosphate/water dikinase regulatory protein family. PDRP subfamily.

It catalyses the reaction N(tele)-phospho-L-histidyl/L-threonyl-[pyruvate, phosphate dikinase] + ADP = N(tele)-phospho-L-histidyl/O-phospho-L-threonyl-[pyruvate, phosphate dikinase] + AMP + H(+). The catalysed reaction is N(tele)-phospho-L-histidyl/O-phospho-L-threonyl-[pyruvate, phosphate dikinase] + phosphate + H(+) = N(tele)-phospho-L-histidyl/L-threonyl-[pyruvate, phosphate dikinase] + diphosphate. Functionally, bifunctional serine/threonine kinase and phosphorylase involved in the regulation of the pyruvate, phosphate dikinase (PPDK) by catalyzing its phosphorylation/dephosphorylation. The sequence is that of Putative pyruvate, phosphate dikinase regulatory protein from Rhodopseudomonas palustris (strain HaA2).